The chain runs to 144 residues: Small ribosomal subunit protein bS6 (144 aa).

The tract at residues 92 to 144 is disordered; that stretch reads KVDGHDEGPSVQMQKRDDRGDREERGDRGDRGDRGPRGDRGPREDRGPRPERR. The span at 93–144 shows a compositional bias: basic and acidic residues; it reads VDGHDEGPSVQMQKRDDRGDREERGDRGDRGDRGPRGDRGPREDRGPRPERR.

Belongs to the bacterial ribosomal protein bS6 family.

Functionally, binds together with bS18 to 16S ribosomal RNA. The sequence is that of Small ribosomal subunit protein bS6 (rpsF) from Rhodobacter capsulatus (strain ATCC BAA-309 / NBRC 16581 / SB1003).